The chain runs to 396 residues: Elongation factor Tu (396 aa).

In terms of domain architecture, tr-type G spans 10–206 (KEHVNIGTIG…AVDTWIETPV (197 aa)). Residues 19-26 (GHVDHGKT) form a G1 region. Position 19–26 (19–26 (GHVDHGKT)) interacts with GTP. Residue threonine 26 coordinates Mg(2+). A G2 region spans residues 60-64 (GITIN). Residues 81–84 (DCPG) form a G3 region. Residues 81 to 85 (DCPGH) and 136 to 139 (NKCD) contribute to the GTP site. The tract at residues 136 to 139 (NKCD) is G4. The G5 stretch occupies residues 176–178 (SAL).

It belongs to the TRAFAC class translation factor GTPase superfamily. Classic translation factor GTPase family. EF-Tu/EF-1A subfamily. As to quaternary structure, monomer.

It is found in the cytoplasm. The catalysed reaction is GTP + H2O = GDP + phosphate + H(+). Functionally, GTP hydrolase that promotes the GTP-dependent binding of aminoacyl-tRNA to the A-site of ribosomes during protein biosynthesis. The chain is Elongation factor Tu from Mycoplasmopsis agalactiae (strain NCTC 10123 / CIP 59.7 / PG2) (Mycoplasma agalactiae).